A 287-amino-acid chain; its full sequence is Shikimate kinase (287 aa).

87–97 (PLASGLKSSSA) is a binding site for ATP.

It belongs to the GHMP kinase family. Archaeal shikimate kinase subfamily.

The protein localises to the cytoplasm. It carries out the reaction shikimate + ATP = 3-phosphoshikimate + ADP + H(+). The protein operates within metabolic intermediate biosynthesis; chorismate biosynthesis; chorismate from D-erythrose 4-phosphate and phosphoenolpyruvate: step 5/7. The chain is Shikimate kinase from Methanococcoides burtonii (strain DSM 6242 / NBRC 107633 / OCM 468 / ACE-M).